The chain runs to 267 residues: Cell division protein FtsQ (267 aa).

At 1–32 (MRKKTSSNKKKQTKKTNNISLRRKLRLIYKKA) the chain is on the cytoplasmic side. Residues 33–53 (ILGLKIALIIFVCLFVFTKYF) form a helical membrane-spanning segment. Residues 54-267 (AGIKTYLTTN…DKNKYYIEKY (214 aa)) are Periplasmic-facing. A POTRA domain is found at 73–141 (FKLENVIIEG…NTVYIKLFER (69 aa)).

It belongs to the FtsQ/DivIB family. FtsQ subfamily.

The protein localises to the cell inner membrane. Functionally, essential cell division protein. The polypeptide is Cell division protein FtsQ (Rickettsia felis (strain ATCC VR-1525 / URRWXCal2) (Rickettsia azadi)).